The primary structure comprises 245 residues: Acetylglutamate kinase (245 aa).

Substrate contacts are provided by residues 41–42, arginine 63, and asparagine 156; that span reads GG.

The protein belongs to the acetylglutamate kinase family. ArgB subfamily.

It is found in the cytoplasm. It carries out the reaction N-acetyl-L-glutamate + ATP = N-acetyl-L-glutamyl 5-phosphate + ADP. It functions in the pathway amino-acid biosynthesis; L-arginine biosynthesis; N(2)-acetyl-L-ornithine from L-glutamate: step 2/4. Catalyzes the ATP-dependent phosphorylation of N-acetyl-L-glutamate. The sequence is that of Acetylglutamate kinase from Leuconostoc citreum (strain KM20).